The sequence spans 300 residues: GTPase Era (300 aa).

An Era-type G domain is found at 7–175; the sequence is KSGFAVMAGL…KTAVAETLPF (169 aa). The G1 stretch occupies residues 15–22; it reads GLPNAGKS. Position 15–22 (15–22) interacts with GTP; sequence GLPNAGKS. A G2 region spans residues 41–45; that stretch reads QMTRQ. The tract at residues 62–65 is G3; the sequence is DTPG. GTP-binding positions include 62-66 and 124-127; these read DTPGF and NKAD. The interval 124-127 is G4; it reads NKAD. The tract at residues 154-156 is G5; it reads ISA. Positions 198–283 constitute a KH type-2 domain; the sequence is IREQIFNLYE…RLELEVSVEP (86 aa).

It belongs to the TRAFAC class TrmE-Era-EngA-EngB-Septin-like GTPase superfamily. Era GTPase family. Monomer.

Its subcellular location is the cytoplasm. The protein localises to the cell inner membrane. Its function is as follows. An essential GTPase that binds both GDP and GTP, with rapid nucleotide exchange. Plays a role in 16S rRNA processing and 30S ribosomal subunit biogenesis and possibly also in cell cycle regulation and energy metabolism. This Elusimicrobium minutum (strain Pei191) protein is GTPase Era.